The sequence spans 438 residues: Gamma-glutamyl phosphate reductase (438 aa).

The segment at 1–21 (MTAQTSSDVTDQKTDLTRESE) is disordered. Basic and acidic residues predominate over residues 10-21 (TDQKTDLTRESE).

The protein belongs to the gamma-glutamyl phosphate reductase family.

It localises to the cytoplasm. It catalyses the reaction L-glutamate 5-semialdehyde + phosphate + NADP(+) = L-glutamyl 5-phosphate + NADPH + H(+). The protein operates within amino-acid biosynthesis; L-proline biosynthesis; L-glutamate 5-semialdehyde from L-glutamate: step 2/2. Catalyzes the NADPH-dependent reduction of L-glutamate 5-phosphate into L-glutamate 5-semialdehyde and phosphate. The product spontaneously undergoes cyclization to form 1-pyrroline-5-carboxylate. The protein is Gamma-glutamyl phosphate reductase of Corynebacterium efficiens (strain DSM 44549 / YS-314 / AJ 12310 / JCM 11189 / NBRC 100395).